We begin with the raw amino-acid sequence, 345 residues long: Probable dual-specificity RNA methyltransferase RlmN (345 aa).

E90 (proton acceptor) is an active-site residue. One can recognise a Radical SAM core domain in the interval 96–326 (YDYGNSICIS…STIRKEMGAD (231 aa)). C103 and C331 are joined by a disulfide. 3 residues coordinate [4Fe-4S] cluster: C110, C114, and C117. S-adenosyl-L-methionine-binding positions include 157 to 158 (GE), S189, 212 to 214 (SLH), and N288. The active-site S-methylcysteine intermediate is the C331.

It belongs to the radical SAM superfamily. RlmN family. It depends on [4Fe-4S] cluster as a cofactor.

The protein localises to the cytoplasm. It carries out the reaction adenosine(2503) in 23S rRNA + 2 reduced [2Fe-2S]-[ferredoxin] + 2 S-adenosyl-L-methionine = 2-methyladenosine(2503) in 23S rRNA + 5'-deoxyadenosine + L-methionine + 2 oxidized [2Fe-2S]-[ferredoxin] + S-adenosyl-L-homocysteine. It catalyses the reaction adenosine(37) in tRNA + 2 reduced [2Fe-2S]-[ferredoxin] + 2 S-adenosyl-L-methionine = 2-methyladenosine(37) in tRNA + 5'-deoxyadenosine + L-methionine + 2 oxidized [2Fe-2S]-[ferredoxin] + S-adenosyl-L-homocysteine. Its function is as follows. Specifically methylates position 2 of adenine 2503 in 23S rRNA and position 2 of adenine 37 in tRNAs. The polypeptide is Probable dual-specificity RNA methyltransferase RlmN (Clostridium acetobutylicum (strain ATCC 824 / DSM 792 / JCM 1419 / IAM 19013 / LMG 5710 / NBRC 13948 / NRRL B-527 / VKM B-1787 / 2291 / W)).